Reading from the N-terminus, the 401-residue chain is S-adenosylmethionine synthase (401 aa).

Residue H15 participates in ATP binding. D17 is a binding site for Mg(2+). E48 contributes to the K(+) binding site. The L-methionine site is built by E61 and Q104. The tract at residues 104 to 114 is flexible loop; the sequence is QSPDIALGVDR. Residues 179–181, 246–247, D255, 261–262, A278, and K282 contribute to the ATP site; these read DGK, RF, and RK. Position 255 (D255) interacts with L-methionine. K286 serves as a coordination point for L-methionine.

The protein belongs to the AdoMet synthase family. In terms of assembly, homotetramer; dimer of dimers. Mg(2+) serves as cofactor. It depends on K(+) as a cofactor.

Its subcellular location is the cytoplasm. The enzyme catalyses L-methionine + ATP + H2O = S-adenosyl-L-methionine + phosphate + diphosphate. It participates in amino-acid biosynthesis; S-adenosyl-L-methionine biosynthesis; S-adenosyl-L-methionine from L-methionine: step 1/1. Catalyzes the formation of S-adenosylmethionine (AdoMet) from methionine and ATP. The overall synthetic reaction is composed of two sequential steps, AdoMet formation and the subsequent tripolyphosphate hydrolysis which occurs prior to release of AdoMet from the enzyme. The chain is S-adenosylmethionine synthase from Petrotoga mobilis (strain DSM 10674 / SJ95).